The chain runs to 245 residues: Acetylglutamate kinase (245 aa).

Substrate contacts are provided by residues Gly-41 to Gly-42, Arg-63, and Asn-156.

The protein belongs to the acetylglutamate kinase family. ArgB subfamily.

The protein resides in the cytoplasm. It carries out the reaction N-acetyl-L-glutamate + ATP = N-acetyl-L-glutamyl 5-phosphate + ADP. Its pathway is amino-acid biosynthesis; L-arginine biosynthesis; N(2)-acetyl-L-ornithine from L-glutamate: step 2/4. Catalyzes the ATP-dependent phosphorylation of N-acetyl-L-glutamate. The protein is Acetylglutamate kinase of Streptococcus gordonii (strain Challis / ATCC 35105 / BCRC 15272 / CH1 / DL1 / V288).